Here is a 365-residue protein sequence, read N- to C-terminus: Beta-parvin (365 aa).

Positions 1–12 are enriched in pro residues; the sequence is MSSAPPRSPTPR. Residues 1-52 are disordered; that stretch reads MSSAPPRSPTPRAPKMKKDESFLGKLGGTLARKKKTREVTDLQEEGKSAINS. A Phosphoserine modification is found at S8. The span at 37–47 shows a compositional bias: basic and acidic residues; that stretch reads REVTDLQEEGK. 2 Calponin-homology (CH) domains span residues 88–195 and 255–362; these read KELV…MHFR and NLVK…TKYK.

It belongs to the parvin family. Interacts with ILK, ARHGEF6, PXN (via LD motifs), ACTN2 and actin. Interacts with DYSF. Post-translationally, phosphorylated by ILK. As to expression, expressed predominantly in heart and moderately in spleen, lung and skeletal muscle.

It localises to the cell junction. The protein resides in the focal adhesion. Its subcellular location is the cell membrane. The protein localises to the cytoplasm. It is found in the cytoskeleton. It localises to the cell projection. The protein resides in the lamellipodium. Its subcellular location is the myofibril. The protein localises to the sarcomere. It is found in the z line. Adapter protein that plays a role in integrin signaling via ILK and in activation of the GTPases CDC42 and RAC1 by guanine exchange factors, such as ARHGEF6. Is involved in the reorganization of the actin cytoskeleton and formation of lamellipodia. Plays a role in cell adhesion, cell spreading, establishment or maintenance of cell polarity, and cell migration. This is Beta-parvin (Parvb) from Mus musculus (Mouse).